The chain runs to 224 residues: Uracil-DNA glycosylase (224 aa).

Asp-61 functions as the Proton acceptor in the catalytic mechanism.

The protein belongs to the uracil-DNA glycosylase (UDG) superfamily. UNG family.

The protein localises to the cytoplasm. The catalysed reaction is Hydrolyzes single-stranded DNA or mismatched double-stranded DNA and polynucleotides, releasing free uracil.. Its function is as follows. Excises uracil residues from the DNA which can arise as a result of misincorporation of dUMP residues by DNA polymerase or due to deamination of cytosine. The protein is Uracil-DNA glycosylase of Mannheimia succiniciproducens (strain KCTC 0769BP / MBEL55E).